Consider the following 360-residue polypeptide: Phosphoserine aminotransferase (360 aa).

Position 41 (arginine 41) interacts with L-glutamate. The pyridoxal 5'-phosphate site is built by tryptophan 101, threonine 152, aspartate 172, and glutamine 195. Lysine 196 is subject to N6-(pyridoxal phosphate)lysine. 237 to 238 (NT) contributes to the pyridoxal 5'-phosphate binding site.

Belongs to the class-V pyridoxal-phosphate-dependent aminotransferase family. SerC subfamily. Homodimer. Requires pyridoxal 5'-phosphate as cofactor.

The protein localises to the cytoplasm. It carries out the reaction O-phospho-L-serine + 2-oxoglutarate = 3-phosphooxypyruvate + L-glutamate. It catalyses the reaction 4-(phosphooxy)-L-threonine + 2-oxoglutarate = (R)-3-hydroxy-2-oxo-4-phosphooxybutanoate + L-glutamate. It participates in amino-acid biosynthesis; L-serine biosynthesis; L-serine from 3-phospho-D-glycerate: step 2/3. It functions in the pathway cofactor biosynthesis; pyridoxine 5'-phosphate biosynthesis; pyridoxine 5'-phosphate from D-erythrose 4-phosphate: step 3/5. Functionally, catalyzes the reversible conversion of 3-phosphohydroxypyruvate to phosphoserine and of 3-hydroxy-2-oxo-4-phosphonooxybutanoate to phosphohydroxythreonine. This chain is Phosphoserine aminotransferase, found in Paraburkholderia phytofirmans (strain DSM 17436 / LMG 22146 / PsJN) (Burkholderia phytofirmans).